Reading from the N-terminus, the 1453-residue chain is DNA-directed RNA polymerase IV subunit 1 (1453 aa).

7 residues coordinate Zn(2+): Cys56, Cys59, Cys67, His70, Cys97, Cys100, and Cys121. The Mg(2+) site is built by Asp447, Asp449, and Asp451. Residues Pro806–Asp818 are bridging helix.

It belongs to the RNA polymerase beta' chain family. Component of the RNA polymerase IV complex. Interacts with NRPD2, NRPD3, NRPD3B, NRPD4, NRPD5, NRPD5B, NRPD6A, NRPD7, NRPD7B, NRPD9A, NRPD9B, NRPD10, NRPD11, NRPD12, RDR2, RDM4, CLSY1, CLSY2, CLSY3, CLSY4 and SHH1. In terms of tissue distribution, mostly expressed in flowers, and, to a lower extent, in leaves.

Its subcellular location is the nucleus. It carries out the reaction RNA(n) + a ribonucleoside 5'-triphosphate = RNA(n+1) + diphosphate. Functionally, DNA-dependent RNA polymerase catalyzes the transcription of DNA into RNA using the four ribonucleoside triphosphates as substrates. Largest and catalytic component of RNA polymerase IV which mediates 24-nt short-interfering RNAs (siRNA) accumulation. Implicated in siRNA-directed heterochromatin formation through the action of DCL3 and AGO4, and subsequent DNA methylation-dependent silencing of targeted sequences. Essential component of a self-reinforcing loop coupling de novo DNA methylation to siRNA production. Required for intercellular but not intracellular RNA interference (RNAi) leading to systemic post-transcriptional gene silencing. Involved in the maintenance of post-transcriptional RNA silencing. This is DNA-directed RNA polymerase IV subunit 1 (NRPD1) from Arabidopsis thaliana (Mouse-ear cress).